Consider the following 525-residue polypeptide: cAMP-dependent protein kinase regulatory subunit (525 aa).

Residues 28 to 213 (QFCANWFNSK…RIRGSIGNNL (186 aa)) are dimerization and phosphorylation. Disordered stretches follow at residues 114–146 (MDAS…SSLG) and 170–196 (SVSA…TVIP). Low complexity predominate over residues 124–146 (PAPATPAAPAAPAAPAAPFSSLG). Phosphoserine; by autocatalysis is present on Ser170. Residues 214 to 345 (LFRN…FLMD) and 348 to 472 (LFER…TYGD) each bind a nucleoside 3',5'-cyclic phosphate. Positions 295, 304, and 417 each coordinate 3',5'-cyclic AMP. The tract at residues 497–525 (SGADTSFPHPMDSSAKPGEGAWSAPNPFA) is disordered.

Belongs to the cAMP-dependent kinase regulatory chain family. Tetramer, composed of 2 regulatory (R) and 2 catalytic (C) subunits. In the presence of cAMP it dissociates into 2 active monomeric C subunits and an R dimer.

This chain is cAMP-dependent protein kinase regulatory subunit (PKAR), found in Mycosarcoma maydis (Corn smut fungus).